The chain runs to 147 residues: Echinoidin (147 aa).

Residues 1–143 enclose the C-type lectin domain; it reads GCCPTFWTSF…STRHYLICKL (143 aa). 3 cysteine pairs are disulfide-bonded: Cys-3/Cys-14, Cys-31/Cys-141, and Cys-116/Cys-132. O-linked (Hex) serine glycosylation occurs at Ser-38. The short motif at 39-41 is the Cell attachment site element; that stretch reads RGD.

Homodimer; disulfide-linked. In terms of processing, the identity of the saccharide is not reported in PubMed:3571253, and it is unlikely to be N-acetylgalactosamine. The sugar attached to Ser-38 is represented simply as Hex. As to expression, coelemic fluid.

Its subcellular location is the secreted. Its function is as follows. Role in the defense system of the organism against microorganisms. This lectin is specific for Gal-GalNAc. In Heliocidaris crassispina (Sea urchin), this protein is Echinoidin.